Here is an 861-residue protein sequence, read N- to C-terminus: DNA mismatch repair protein MutS (861 aa).

616 to 623 (GPNMGGKS) lines the ATP pocket.

Belongs to the DNA mismatch repair MutS family.

This protein is involved in the repair of mismatches in DNA. It is possible that it carries out the mismatch recognition step. This protein has a weak ATPase activity. The protein is DNA mismatch repair protein MutS of Haemophilus influenzae (strain PittEE).